A 544-amino-acid chain; its full sequence is NEDD4-binding protein 3 (544 aa).

Disordered regions lie at residues 61-84 (LPKK…ADYA), 116-252 (SVFK…EFSC), 335-365 (KELR…PEEE), and 430-465 (QEQA…RDSA). S176 is modified (phosphoserine). A compositionally biased stretch (low complexity) spans 186–222 (PSLSDSSSGGSFGRSPGTGPSPFSSSLGHLNHLGGSL). A coiled-coil region spans residues 294–530 (LAELKRLYVE…LEQELRALRE (237 aa)).

Belongs to the N4BP3 family. Binds NEDD4. Interacts with 14-3-3 proteins. Interacts with MAVS.

It is found in the cytoplasmic vesicle. The protein localises to the cell projection. It localises to the axon. Its subcellular location is the dendrite. Its function is as follows. Plays a positive role in the antiviral innate immune signaling pathway. Mechanistically, interacts with MAVS and functions as a positive regulator to promote 'Lys-63'-linked polyubiquitination of MAVS and thus strengthens the interaction between MAVS and TRAF2. Also plays a role in axon and dendrite arborization during cranial nerve development. May also be important for neural crest migration and early development of other anterior structures including eye, brain and cranial cartilage. The sequence is that of NEDD4-binding protein 3 (N4BP3) from Homo sapiens (Human).